Here is a 494-residue protein sequence, read N- to C-terminus: Cysteine--tRNA ligase (494 aa).

Cys-29 serves as a coordination point for Zn(2+). The 'HIGH' region motif lies at 31-41; that stretch reads VTVYDHCHIGH. The Zn(2+) site is built by Cys-209, His-234, and Glu-238. The short motif at 266–270 is the 'KMSKS' region element; sequence KMSKS. Lys-269 is a binding site for ATP.

This sequence belongs to the class-I aminoacyl-tRNA synthetase family. As to quaternary structure, monomer. Zn(2+) serves as cofactor.

Its subcellular location is the cytoplasm. It carries out the reaction tRNA(Cys) + L-cysteine + ATP = L-cysteinyl-tRNA(Cys) + AMP + diphosphate. This chain is Cysteine--tRNA ligase, found in Geotalea daltonii (strain DSM 22248 / JCM 15807 / FRC-32) (Geobacter daltonii).